Here is a 495-residue protein sequence, read N- to C-terminus: MSKLQIIQSKGQYINGEWIKGNGLILESTNPASGTLLWQGNNATDEEIANACYVAHRALKSWANTSFEERARYTKAFVEQVEKNREQLARLISLETGKPLWESQTEVSSVIGKVNLSIQAYQERTWPKQTETAEANACLRFKPHGIVVVLGAFNFPAHLSNGHIVPALLAGNTVLYKPSEHTPAVAELIIQCWHDSGLPPGVINCLQGNANCGNTLLSQDIQGVYFTGSYATGLRIHQQFCNRPEVILALEMGGNNPLVIDEVKDIDAAVYHTILSTMITAGQRCTCARRIIIPDSQTGDLFLERFAKACKLMRIGSFDSQPEPFIGPVISHVQALKHLHAQKQLIEMGGEIILPMSLLLEYTGLVSPGIIDMTRAKNPPDEEIFAPFAQIYRYNHFDEAIQLANQTRYGLSAGLLSDNKDHYQQFYQNIRAGLINWNRPTTGAASSLPFGGVGCSGNHRPSAYFAADYCAYPVASMEQPLLTTPVQRLPGLVLE.

An NAD(+)-binding site is contributed by 228–233; it reads GSYATG. Residues E251 and C285 contribute to the active site.

It belongs to the aldehyde dehydrogenase family. AstD subfamily.

It carries out the reaction N-succinyl-L-glutamate 5-semialdehyde + NAD(+) + H2O = N-succinyl-L-glutamate + NADH + 2 H(+). Its pathway is amino-acid degradation; L-arginine degradation via AST pathway; L-glutamate and succinate from L-arginine: step 4/5. Functionally, catalyzes the NAD-dependent reduction of succinylglutamate semialdehyde into succinylglutamate. The polypeptide is N-succinylglutamate 5-semialdehyde dehydrogenase (Legionella pneumophila (strain Corby)).